The primary structure comprises 350 residues: uncharacterized protein (350 aa).

This is an uncharacterized protein from Sulfolobus islandicus filamentous virus (isolate Iceland/Hveragerdi) (SIFV).